A 305-amino-acid chain; its full sequence is tRNA dimethylallyltransferase (305 aa).

Position 9–16 (9–16 (GPTGAGKT)) interacts with ATP. 11–16 (TGAGKT) contributes to the substrate binding site. Interaction with substrate tRNA stretches follow at residues 34–37 (DSRQ) and 158–162 (QRIVR).

This sequence belongs to the IPP transferase family. As to quaternary structure, monomer. The cofactor is Mg(2+).

It carries out the reaction adenosine(37) in tRNA + dimethylallyl diphosphate = N(6)-dimethylallyladenosine(37) in tRNA + diphosphate. In terms of biological role, catalyzes the transfer of a dimethylallyl group onto the adenine at position 37 in tRNAs that read codons beginning with uridine, leading to the formation of N6-(dimethylallyl)adenosine (i(6)A). The protein is tRNA dimethylallyltransferase of Oleidesulfovibrio alaskensis (strain ATCC BAA-1058 / DSM 17464 / G20) (Desulfovibrio alaskensis).